The sequence spans 1106 residues: Putative pre-mRNA-splicing factor ATP-dependent RNA helicase DHX16 (1106 aa).

3 disordered regions span residues 73 to 100, 120 to 286, and 366 to 394; these read KIQNITSSSSSSSSTSLSSSSSSKDKEK, DDIV…TKSR, and YINDNKNKKGNDSSSSSSYNPEQKEWEQN. A compositionally biased stretch (low complexity) spans 78–94; that stretch reads TSSSSSSSSTSLSSSSS. A compositionally biased stretch (basic residues) spans 138 to 155; it reads KRKKKEKKKEKKDKKDKK. Residues 156-167 show a composition bias toward basic and acidic residues; it reads DKKSSTRKKSDN. Positions 189–201 are enriched in low complexity; the sequence is NNENNDNNNDNNN. Over residues 232–283 the composition is skewed to basic and acidic residues; that stretch reads REQREVKELSDRIKKRDEKSTKKKIVDDSETKESIERKNRLEQNEQLETERT. The Helicase ATP-binding domain occupies 477-640; it reads IDAVREYQVL…FDGAPTFNIP (164 aa). 490–497 lines the ATP pocket; sequence GETGSGKT. The DEAH box motif lies at 587–590; that stretch reads DEAH. Residues 665 to 838 enclose the Helicase C-terminal domain; that stretch reads TVLQIHITEP…NVVLLLKSMG (174 aa).

This sequence belongs to the DEAD box helicase family. DEAH subfamily. DDX16/PRP8 sub-subfamily. Component of pre-catalytic spliceosome complexes.

Its subcellular location is the nucleus. It localises to the nucleoplasm. It carries out the reaction ATP + H2O = ADP + phosphate + H(+). Functionally, required for pre-mRNA splicing as component of the spliceosome. Contributes to pre-mRNA splicing after spliceosome formation and prior to the first transesterification reaction. The polypeptide is Putative pre-mRNA-splicing factor ATP-dependent RNA helicase DHX16 (dhx16) (Dictyostelium discoideum (Social amoeba)).